The following is a 222-amino-acid chain: Urease accessory protein UreF (222 aa).

It belongs to the UreF family. UreD, UreF and UreG form a complex that acts as a GTP-hydrolysis-dependent molecular chaperone, activating the urease apoprotein by helping to assemble the nickel containing metallocenter of UreC. The UreE protein probably delivers the nickel.

It is found in the cytoplasm. Functionally, required for maturation of urease via the functional incorporation of the urease nickel metallocenter. This chain is Urease accessory protein UreF, found in Hahella chejuensis (strain KCTC 2396).